Here is a 53-residue protein sequence, read N- to C-terminus: Light-harvesting protein B-808/866 beta chain (53 aa).

N-formylmethionine is present on Met1. Residues 1–25 (MRDDDDLVPPKWRPLFNNQDWLLHD) are Cytoplasmic-facing. Residues His24 and His42 each contribute to the a bacteriochlorophyll site. The helical transmembrane segment at 26–48 (IVVKSFYGFGVIAAIAHLLVYLW) threads the bilayer. At 49–53 (KPWLP) the chain is on the periplasmic side.

This sequence belongs to the antenna complex beta subunit family. In terms of assembly, the core complex is formed by different alpha and beta chains, binding bacteriochlorophyll molecules, and arranged most probably in tetrameric structures disposed around the reaction center. The non-pigmented gamma chains may constitute additional components.

It localises to the cell membrane. Antenna complexes are light-harvesting systems, which transfer the excitation energy to the reaction centers. The protein is Light-harvesting protein B-808/866 beta chain (puf2B) of Chloroflexus aurantiacus (strain ATCC 29366 / DSM 635 / J-10-fl).